The primary structure comprises 266 residues: Indole-3-glycerol phosphate synthase (266 aa).

The protein belongs to the TrpC family.

It catalyses the reaction 1-(2-carboxyphenylamino)-1-deoxy-D-ribulose 5-phosphate + H(+) = (1S,2R)-1-C-(indol-3-yl)glycerol 3-phosphate + CO2 + H2O. Its pathway is amino-acid biosynthesis; L-tryptophan biosynthesis; L-tryptophan from chorismate: step 4/5. The protein is Indole-3-glycerol phosphate synthase of Herminiimonas arsenicoxydans.